Here is a 296-residue protein sequence, read N- to C-terminus: Protoheme IX farnesyltransferase (296 aa).

At 1 to 9 (MMFKQYLQV) the chain is on the cytoplasmic side. Residues 10–28 (TKPGIIFGNLISVIGGFLL) traverse the membrane as a helical segment. The Periplasmic segment spans residues 29–37 (ASKGSIDYP). The helical transmembrane segment at 38–56 (LFIYTLVGVSLVVASGCVF) threads the bilayer. Topologically, residues 57–78 (NNYIDRDIDRKMERTKNRVLVK) are cytoplasmic. A helical transmembrane segment spans residues 79-97 (GLISPAVSLVYATLLGFAG). Residues 98-107 (FMLLWFGANP) lie on the Periplasmic side of the membrane. A helical membrane pass occupies residues 108–126 (LACWLGVMGFVVYVGVYSL). At 127–197 (YMKRHSVYGT…YQAANIPVLP (71 aa)) the chain is on the cytoplasmic side. A helical transmembrane segment spans residues 198 to 216 (VVKGISVAKNHITLYIIAF). Over 217–228 (AVATLMLSLGGY) the chain is Periplasmic. The helical transmembrane segment at 229–247 (AGYKYLVVAAAVSVWWLGM) threads the bilayer. Residues 248–268 (ALRGYKVADDRIWARKLFGFS) lie on the Cytoplasmic side of the membrane. A helical transmembrane segment spans residues 269-287 (IIAITALSVMMSVDFMVPD). Topologically, residues 288 to 296 (SHTLLAAVW) are periplasmic.

Belongs to the UbiA prenyltransferase family. Protoheme IX farnesyltransferase subfamily.

It localises to the cell inner membrane. It carries out the reaction heme b + (2E,6E)-farnesyl diphosphate + H2O = Fe(II)-heme o + diphosphate. Its pathway is porphyrin-containing compound metabolism; heme O biosynthesis; heme O from protoheme: step 1/1. Its function is as follows. Converts heme B (protoheme IX) to heme O by substitution of the vinyl group on carbon 2 of heme B porphyrin ring with a hydroxyethyl farnesyl side group. In Shigella sonnei (strain Ss046), this protein is Protoheme IX farnesyltransferase.